A 382-amino-acid polypeptide reads, in one-letter code: L-arabinitol 4-dehydrogenase (382 aa).

Positions 55, 80, 81, 110, 113, 116, 124, and 165 each coordinate Zn(2+). NAD(+)-binding positions include 192-193 (PI), Asp-213, Arg-218, Ile-293, and 317-319 (QYR).

Belongs to the zinc-containing alcohol dehydrogenase family. In terms of assembly, homotetramer. It depends on Zn(2+) as a cofactor.

It catalyses the reaction L-arabinitol + NAD(+) = L-xylulose + NADH + H(+). It participates in carbohydrate degradation; L-arabinose degradation via L-arabinitol; D-xylulose 5-phosphate from L-arabinose (fungal route): step 2/5. Functionally, catalyzes the NAD-dependent oxidation of L-arabinitol to L-xylulose in the fungal L-arabinose catabolic pathway. L-arabinose catabolism is important for using plant material as a carbon source. Also active on ribitol and xylitol. Not active with NADP as cosubstrate. The chain is L-arabinitol 4-dehydrogenase (ladA) from Aspergillus oryzae (Yellow koji mold).